We begin with the raw amino-acid sequence, 1395 residues long: DNA-directed RNA polymerase subunit beta' (1395 aa).

Zn(2+) is bound by residues cysteine 70, cysteine 72, cysteine 85, and cysteine 88. Mg(2+)-binding residues include aspartate 470, aspartate 472, and aspartate 474. The Zn(2+) site is built by cysteine 815, cysteine 889, cysteine 896, and cysteine 899.

The protein belongs to the RNA polymerase beta' chain family. In terms of assembly, the RNAP catalytic core consists of 2 alpha, 1 beta, 1 beta' and 1 omega subunit. When a sigma factor is associated with the core the holoenzyme is formed, which can initiate transcription. It depends on Mg(2+) as a cofactor. Requires Zn(2+) as cofactor.

It carries out the reaction RNA(n) + a ribonucleoside 5'-triphosphate = RNA(n+1) + diphosphate. Functionally, DNA-dependent RNA polymerase catalyzes the transcription of DNA into RNA using the four ribonucleoside triphosphates as substrates. This chain is DNA-directed RNA polymerase subunit beta', found in Anaeromyxobacter sp. (strain Fw109-5).